A 95-amino-acid polypeptide reads, in one-letter code: Aspartyl/glutamyl-tRNA(Asn/Gln) amidotransferase subunit C (95 aa).

The protein belongs to the GatC family. In terms of assembly, heterotrimer of A, B and C subunits.

It carries out the reaction L-glutamyl-tRNA(Gln) + L-glutamine + ATP + H2O = L-glutaminyl-tRNA(Gln) + L-glutamate + ADP + phosphate + H(+). The enzyme catalyses L-aspartyl-tRNA(Asn) + L-glutamine + ATP + H2O = L-asparaginyl-tRNA(Asn) + L-glutamate + ADP + phosphate + 2 H(+). Its function is as follows. Allows the formation of correctly charged Asn-tRNA(Asn) or Gln-tRNA(Gln) through the transamidation of misacylated Asp-tRNA(Asn) or Glu-tRNA(Gln) in organisms which lack either or both of asparaginyl-tRNA or glutaminyl-tRNA synthetases. The reaction takes place in the presence of glutamine and ATP through an activated phospho-Asp-tRNA(Asn) or phospho-Glu-tRNA(Gln). In Laribacter hongkongensis (strain HLHK9), this protein is Aspartyl/glutamyl-tRNA(Asn/Gln) amidotransferase subunit C.